Reading from the N-terminus, the 321-residue chain is Olfactory receptor 52P1 (321 aa).

Topologically, residues 1–27 (MESPNHTDVDPSVFFLLGIPGLEQFHL) are extracellular. The N-linked (GlcNAc...) asparagine glycan is linked to Asn-5. A helical transmembrane segment spans residues 28 to 48 (WLSLPVCGLGTATIVGNITIL). Topologically, residues 49–56 (VVVATEPV) are cytoplasmic. The helical transmembrane segment at 57-77 (LHKPVYLFLCMLSTIDLAASV) threads the bilayer. At 78-101 (STVPKLLAIFWCGAGHISASACLA) the chain is on the extracellular side. Cysteines 99 and 191 form a disulfide. Residues 102 to 122 (QMFFIHAFCMMESTVLLAMAF) form a helical membrane-spanning segment. Residues 123 to 141 (DRYVAICHPLRYATILTDT) are Cytoplasmic-facing. Residues 142–162 (IIAHIGVAAVVRGSLLMLPCP) form a helical membrane-spanning segment. Topologically, residues 163–198 (FLIGRLNFCQSHVILHTYCEHMAVVKLACGDTRPNR) are extracellular. The helical transmembrane segment at 199 to 219 (VYGLTAALLVIGVDLFCIGLS) threads the bilayer. Residues 220–239 (YALSAQAVLRLSSHEARSKA) are Cytoplasmic-facing. A helical transmembrane segment spans residues 240 to 260 (LGTCGSHVCVILISYTPALFS). Topologically, residues 261-275 (FFTHRFGHHVPVHIH) are extracellular. Residues 276 to 296 (ILLANVYLLLPPALNPVVYGV) traverse the membrane as a helical segment. Residues 297–315 (KTKQIRKRVVRVFQSGQGM) lie on the Cytoplasmic side of the membrane.

This sequence belongs to the G-protein coupled receptor 1 family.

It is found in the cell membrane. In terms of biological role, odorant receptor. The sequence is that of Olfactory receptor 52P1 from Homo sapiens (Human).